Consider the following 498-residue polypeptide: Ribosomal RNA small subunit methyltransferase G 2 (498 aa).

A methyltransferase G region spans residues 1-230; that stretch reads MRNGTIRYPG…FQRLGPPTRI (230 aa). S-adenosyl-L-methionine-binding residues include Gly-89, Met-94, and Arg-154. The segment at 231–498 is methyltransferase TrmH family; sequence RKETAMKRHG…SQTKHSPAPA (268 aa).

The protein in the N-terminal section; belongs to the methyltransferase superfamily. RNA methyltransferase RsmG family. In the C-terminal section; belongs to the class IV-like SAM-binding methyltransferase superfamily. RNA methyltransferase TrmH family.

The protein localises to the cytoplasm. It carries out the reaction guanosine(527) in 16S rRNA + S-adenosyl-L-methionine = N(7)-methylguanosine(527) in 16S rRNA + S-adenosyl-L-homocysteine. Functionally, specifically methylates the N7 position of guanine in position 527 of 16S rRNA. The sequence is that of Ribosomal RNA small subunit methyltransferase G 2 (rsmG2) from Syntrophobacter fumaroxidans (strain DSM 10017 / MPOB).